Reading from the N-terminus, the 137-residue chain is Acidic phospholipase A2 Vur-PL3 (137 aa).

The signal sequence occupies residues 1–16; that stretch reads MRTLWIVAVCLIGVEG. Cystine bridges form between Cys-42–Cys-131, Cys-44–Cys-60, Cys-59–Cys-111, Cys-65–Cys-137, Cys-66–Cys-104, Cys-73–Cys-97, and Cys-91–Cys-102. Ca(2+) contacts are provided by Tyr-43, Gly-45, and Gly-47. His-63 is an active-site residue. Asp-64 is a Ca(2+) binding site. Residue Asp-105 is part of the active site.

It depends on Ca(2+) as a cofactor. Expressed by the venom gland.

It is found in the secreted. It carries out the reaction a 1,2-diacyl-sn-glycero-3-phosphocholine + H2O = a 1-acyl-sn-glycero-3-phosphocholine + a fatty acid + H(+). This is Acidic phospholipase A2 Vur-PL3 from Vipera renardi (Steppe viper).